Here is a 325-residue protein sequence, read N- to C-terminus: tRNA N6-adenosine threonylcarbamoyltransferase (325 aa).

Fe cation is bound by residues H107, H111, and Y127. Substrate contacts are provided by residues 127–131 (YVSGG), D159, G172, E176, and N257. D285 provides a ligand contact to Fe cation.

It belongs to the KAE1 / TsaD family. In terms of assembly, monomer. Component of the KEOPS complex that consists of Kae1, Bud32, Cgi121 and Pcc1; the whole complex dimerizes. Fe(2+) is required as a cofactor.

The protein localises to the cytoplasm. The enzyme catalyses L-threonylcarbamoyladenylate + adenosine(37) in tRNA = N(6)-L-threonylcarbamoyladenosine(37) in tRNA + AMP + H(+). In terms of biological role, required for the formation of a threonylcarbamoyl group on adenosine at position 37 (t(6)A37) in tRNAs that read codons beginning with adenine. Is a component of the KEOPS complex that is probably involved in the transfer of the threonylcarbamoyl moiety of threonylcarbamoyl-AMP (TC-AMP) to the N6 group of A37. Kae1 likely plays a direct catalytic role in this reaction, but requires other protein(s) of the complex to fulfill this activity. This is tRNA N6-adenosine threonylcarbamoyltransferase from Thermococcus gammatolerans (strain DSM 15229 / JCM 11827 / EJ3).